A 64-amino-acid chain; its full sequence is DNA gyrase inhibitor YacG (64 aa).

The Zn(2+) site is built by cysteine 10, cysteine 13, cysteine 29, and cysteine 33.

This sequence belongs to the DNA gyrase inhibitor YacG family. In terms of assembly, interacts with GyrB. The cofactor is Zn(2+).

Its function is as follows. Inhibits all the catalytic activities of DNA gyrase by preventing its interaction with DNA. Acts by binding directly to the C-terminal domain of GyrB, which probably disrupts DNA binding by the gyrase. The chain is DNA gyrase inhibitor YacG from Pectobacterium atrosepticum (strain SCRI 1043 / ATCC BAA-672) (Erwinia carotovora subsp. atroseptica).